The chain runs to 262 residues: Acyl-[acyl-carrier-protein]--UDP-N-acetylglucosamine O-acyltransferase (262 aa).

This sequence belongs to the transferase hexapeptide repeat family. LpxA subfamily. Homotrimer.

The protein localises to the cytoplasm. It carries out the reaction a (3R)-hydroxyacyl-[ACP] + UDP-N-acetyl-alpha-D-glucosamine = a UDP-3-O-[(3R)-3-hydroxyacyl]-N-acetyl-alpha-D-glucosamine + holo-[ACP]. It participates in glycolipid biosynthesis; lipid IV(A) biosynthesis; lipid IV(A) from (3R)-3-hydroxytetradecanoyl-[acyl-carrier-protein] and UDP-N-acetyl-alpha-D-glucosamine: step 1/6. In terms of biological role, involved in the biosynthesis of lipid A, a phosphorylated glycolipid that anchors the lipopolysaccharide to the outer membrane of the cell. In Yersinia pseudotuberculosis serotype O:1b (strain IP 31758), this protein is Acyl-[acyl-carrier-protein]--UDP-N-acetylglucosamine O-acyltransferase.